The following is a 552-amino-acid chain: MKALWLENINESLVKDFYETQTEEEQNAGFEGVLSFGTAGIRSTFGLGPARLNAFTVRKVALGLAQYLNHNVDDASVVIHFDTRFLSKAFSQEMASVLANNGITAIISDNYKSTPELSFAVRHLQVNAGIMITASHNPKNYNGIKIYNEKGGQLLPEASEQLSEYINSIETPLNIEKGDFNAFVENGKIKYMSNEVTESYKKEVKSLVGSIDAHDAKVILTSLHGTSLPLVSDILTELDYHNFVIEKEQSEPNGNFPTVAIANPEDEAAFTLGKQLADKTDAQLIIATDPDADRLGFIERYGDNDFRYFNGNEIGLLLMKLRFQDLTEDSTPQYMIKSIVTSELAERLATSLNVEVNDVLTGFKFISDLIEHKQKDDDKQLLLAFEESHGYLAQPISRDKDAIQMVPLLVKYKNLLDKNGITFKETIEDIYENIGYFKDRTLAPTFEGKAGVKKIESIMSQFRNEQVFSICGMDVLKIEDYHVGEVRDMITGHTEKLTLPKTNLIRFIFENGFIALRPSGTEPKIKLYFSLEVENIDEITQQFEANYINNIV.

The Phosphoserine intermediate role is filled by Ser135. Mg(2+)-binding residues include Ser135, Asp289, Asp291, and Asp293.

Belongs to the phosphohexose mutase family. Mg(2+) is required as a cofactor.

It carries out the reaction alpha-D-glucose 1-phosphate = alpha-D-glucose 6-phosphate. Its pathway is glycolipid metabolism; diglucosyl-diacylglycerol biosynthesis. Catalyzes the interconversion between glucose-6-phosphate and alpha-glucose-1-phosphate. This is the first step in the biosynthesis of diglucosyl-diacylglycerol (Glc2-DAG), i.e. a glycolipid found in the membrane, which is also used as a membrane anchor for lipoteichoic acid (LTA). The protein is Phosphoglucomutase (pgcA) of Staphylococcus saprophyticus subsp. saprophyticus (strain ATCC 15305 / DSM 20229 / NCIMB 8711 / NCTC 7292 / S-41).